Reading from the N-terminus, the 333-residue chain is Homeobox protein HMX1 (333 aa).

Disordered stretches follow at residues methionine 1–alanine 74, glycine 86–cysteine 109, and cysteine 139–threonine 204. Residues aspartate 17–alanine 30 are compositionally biased toward polar residues. Positions threonine 87–glycine 105 are enriched in gly residues. The span at threonine 144–arginine 158 shows a compositional bias: basic and acidic residues. The segment covering alanine 159–serine 176 has biased composition (gly residues). Residues glutamate 181 to glutamate 192 show a composition bias toward acidic residues. Positions lysine 201–leucine 260 form a DNA-binding region, homeobox. The HMX family specific domain 1 motif lies at alanine 261–histidine 271.

This sequence belongs to the HMX homeobox family.

It is found in the nucleus. In terms of biological role, DNA-binding protein that binds to the 5'-CAAG-3' core sequence. May function as a transcriptional repressor. Seems to act as a transcriptional antagonist of NKX2-5. May play an important role in the development of craniofacial structures such as the eye and ear. The polypeptide is Homeobox protein HMX1 (HMX1) (Gallus gallus (Chicken)).